The following is a 110-amino-acid chain: UPF0060 membrane protein Bamb_1160 (110 aa).

The next 4 helical transmembrane spans lie at 9–29, 34–54, 66–86, and 88–108; these read ALFAVTALAEIVGCYLPWLVL, PVWLLVPAALSLALFAWLLTL, YGGVYIAVALIWLRVVDGVAL, and RWDAAGAVLALGGMAVIALQP.

The protein belongs to the UPF0060 family.

Its subcellular location is the cell inner membrane. The protein is UPF0060 membrane protein Bamb_1160 of Burkholderia ambifaria (strain ATCC BAA-244 / DSM 16087 / CCUG 44356 / LMG 19182 / AMMD) (Burkholderia cepacia (strain AMMD)).